A 1215-amino-acid chain; its full sequence is DNA-directed RNA polymerase subunit beta' (1215 aa).

Residues Cys-60, Cys-62, Cys-75, and Cys-78 each coordinate Zn(2+). Mg(2+) is bound by residues Asp-449, Asp-451, and Asp-453. Positions 818, 892, 899, and 902 each coordinate Zn(2+).

The protein belongs to the RNA polymerase beta' chain family. In terms of assembly, the RNAP catalytic core consists of 2 alpha, 1 beta, 1 beta' and 1 omega subunit. When a sigma factor is associated with the core the holoenzyme is formed, which can initiate transcription. Requires Mg(2+) as cofactor. Zn(2+) is required as a cofactor.

It catalyses the reaction RNA(n) + a ribonucleoside 5'-triphosphate = RNA(n+1) + diphosphate. DNA-dependent RNA polymerase catalyzes the transcription of DNA into RNA using the four ribonucleoside triphosphates as substrates. In Limosilactobacillus fermentum (strain NBRC 3956 / LMG 18251) (Lactobacillus fermentum), this protein is DNA-directed RNA polymerase subunit beta'.